A 51-amino-acid polypeptide reads, in one-letter code: Protein SspM (51 aa).

It belongs to the alpha/beta-type SASP family.

This chain is Protein SspM (sspM), found in Mycolicibacterium phlei (Mycobacterium phlei).